Reading from the N-terminus, the 501-residue chain is Dipeptide and tripeptide permease A (501 aa).

Topologically, residues 1–21 (MSTANKKPTESVSLNAFKQPK) are cytoplasmic. Residues 22–44 (AFYLIFSIELWERFGYYGLQGIM) traverse the membrane as a helical segment. The Periplasmic portion of the chain corresponds to 45–59 (AVYLVKQLGMSEADS). A helical transmembrane segment spans residues 60–80 (ITLFSSFSALVYGLVAIGGWL). Over 81–89 (GDKILGTKR) the chain is Cytoplasmic. The chain crosses the membrane as a helical span at residues 90–110 (VIMLGAVVLAIGYALVAWSGH). Position 111 (aspartate 111) is a topological domain, periplasmic. The chain crosses the membrane as a helical span at residues 112-132 (AGIVYMGMAAIAVGNGLFKAN). Residues 133-153 (PSSLLSTCYAKDDPRLDGAFT) are Cytoplasmic-facing. A helical transmembrane segment spans residues 154–174 (MYYMSVNIGSFFSMLATPWLA). At 175-178 (ARYG) the chain is on the periplasmic side. Residues 179–199 (WSTAFALSVVGMLITVVNFAF) form a helical membrane-spanning segment. Residues 200–219 (CQRWVKSYGSKPDFEPINFR) are Cytoplasmic-facing. A helical transmembrane segment spans residues 220-240 (NLLLTIVGIVVLIAVATWLLH). Residues 241–246 (NQDIAR) are Periplasmic-facing. The chain crosses the membrane as a helical span at residues 247-267 (MVLGVIALGIVIIFGKEAFSM). Topologically, residues 268–274 (HGAARRK) are cytoplasmic. A helical transmembrane segment spans residues 275 to 295 (MIVAFILMLQAIIFFVLYSQM). Topologically, residues 296–320 (PTSLNFFAIRNVEHSILGIAFEPEQ) are periplasmic. A helical membrane pass occupies residues 321 to 341 (YQALNPFWIITGSPILAAIYN). Residues 342 to 352 (RMGDTLPMPMK) lie on the Cytoplasmic side of the membrane. Residues 353 to 373 (FAIGMVLCSGAFLILPLGAKF) form a helical membrane-spanning segment. The Periplasmic segment spans residues 374 to 383 (ANDAGIVSVN). The helical transmembrane segment at 384-404 (WLIASYGLQSIGELMISGLGL) threads the bilayer. At 405–414 (AMVAQLVPQR) the chain is on the cytoplasmic side. A helical transmembrane segment spans residues 415–435 (LMGFIMGSWFLTTAGANIIGG). Residues 436–459 (YVANLMAVPSDVTDPLMSLEVYGR) are Periplasmic-facing. Residues 460 to 480 (VFMQIGIATAVIAVLMLLTAP) traverse the membrane as a helical segment. Residues 481 to 501 (KLNRMTQDDDTAEKGSKAATV) are Cytoplasmic-facing.

It belongs to the major facilitator superfamily. Proton-dependent oligopeptide transporter (POT/PTR) (TC 2.A.17) family. DtpA subfamily.

The protein resides in the cell inner membrane. Its function is as follows. Proton-dependent permease that transports di- and tripeptides. The protein is Dipeptide and tripeptide permease A of Salmonella typhi.